Here is a 113-residue protein sequence, read N- to C-terminus: C-X-C motif chemokine 6 (113 aa).

A signal peptide spans 1–36 (MSLLPSRAARVPGPSSSLCALLALLLLTPPGPLVSA). 2 disulfide bridges follow: Cys48-Cys74 and Cys50-Cys90.

It belongs to the intercrine alpha (chemokine CxC) family.

It localises to the secreted. Functionally, chemotactic for neutrophil granulocytes. Signals through binding and activation of its receptors (CXCR1 and CXCR2). In addition to its chemotactic and angiogenic properties, it has strong antibacterial activity against Gram-positive and Gram-negative bacteria (90-fold-higher when compared to CXCL5 and CXCL7). The sequence is that of C-X-C motif chemokine 6 (CXCL6) from Equus caballus (Horse).